The primary structure comprises 626 residues: Transketolase-like protein 2 (626 aa).

Residues S41, H78, and 124-126 each bind thiamine diphosphate; that span reads GSL. Residue D156 coordinates Mg(2+). Thiamine diphosphate-binding residues include G157 and N186. The Mg(2+) site is built by N186 and L188. Residues K248 and H262 each coordinate thiamine diphosphate. Substrate is bound by residues H262 and S349. The thiamine diphosphate site is built by E370 and F396. The active-site Proton donor is E370. H420 and D428 together coordinate substrate. Q432 serves as a coordination point for thiamine diphosphate.

Belongs to the transketolase family. As to quaternary structure, homodimer. Requires Mg(2+) as cofactor. The cofactor is Ca(2+). It depends on Mn(2+) as a cofactor. Co(2+) serves as cofactor. Thiamine diphosphate is required as a cofactor. Overexpressed in hepatoma cancer cells.

It carries out the reaction D-sedoheptulose 7-phosphate + D-glyceraldehyde 3-phosphate = aldehydo-D-ribose 5-phosphate + D-xylulose 5-phosphate. Functionally, plays an essential role in total transketolase activity and cell proliferation in cancer cells; after transfection with anti-TKTL1 siRNA, total transketolase activity dramatically decreases and proliferation was significantly inhibited in cancer cells. Plays a pivotal role in carcinogenesis. This is Transketolase-like protein 2 (TKTL2) from Homo sapiens (Human).